Here is a 1026-residue protein sequence, read N- to C-terminus: Beta-galactosidase (1026 aa).

Substrate-binding residues include N104 and D203. D203 is a Na(+) binding site. E418, H420, and E463 together coordinate Mg(2+). Residues E463 and 539-542 each bind substrate; that span reads EYAH. E463 (proton donor) is an active-site residue. E539 (nucleophile) is an active-site residue. N599 is a binding site for Mg(2+). Na(+) contacts are provided by F603 and N606. Substrate is bound by residues N606 and W1002.

Belongs to the glycosyl hydrolase 2 family. Homotetramer. Mg(2+) is required as a cofactor. Na(+) serves as cofactor.

It carries out the reaction Hydrolysis of terminal non-reducing beta-D-galactose residues in beta-D-galactosides.. The protein is Beta-galactosidase of Erwinia tasmaniensis (strain DSM 17950 / CFBP 7177 / CIP 109463 / NCPPB 4357 / Et1/99).